The following is a 205-amino-acid chain: MSKRHSAKYKLDRRMGENIWGRPKSPVNSRAYGPGQHGQRRKSKVSDFGLQLRAKQKLKGYYGNITEKQFVRIYTEAARRKGNTSENLIALLESRLDAVVYRAKFVPTPFAARQFVNHGHVLVNGKRVNIPSYRVKPGDVVSVRERSRNMALVLEALQSSERDTPDYITLDAKGMSATFVRAPELAEVPYPVKMEPNLVVEFYAS.

Residues 18–46 (NIWGRPKSPVNSRAYGPGQHGQRRKSKVS) are disordered. The region spanning 94 to 155 (SRLDAVVYRA…RSRNMALVLE (62 aa)) is the S4 RNA-binding domain.

It belongs to the universal ribosomal protein uS4 family. Part of the 30S ribosomal subunit. Contacts protein S5. The interaction surface between S4 and S5 is involved in control of translational fidelity.

In terms of biological role, one of the primary rRNA binding proteins, it binds directly to 16S rRNA where it nucleates assembly of the body of the 30S subunit. Functionally, with S5 and S12 plays an important role in translational accuracy. This chain is Small ribosomal subunit protein uS4, found in Phenylobacterium zucineum (strain HLK1).